Reading from the N-terminus, the 185-residue chain is Elongation factor P (185 aa).

It belongs to the elongation factor P family.

It localises to the cytoplasm. The protein operates within protein biosynthesis; polypeptide chain elongation. Its function is as follows. Involved in peptide bond synthesis. Stimulates efficient translation and peptide-bond synthesis on native or reconstituted 70S ribosomes in vitro. Probably functions indirectly by altering the affinity of the ribosome for aminoacyl-tRNA, thus increasing their reactivity as acceptors for peptidyl transferase. This chain is Elongation factor P, found in Microcystis aeruginosa (strain NIES-843 / IAM M-2473).